The sequence spans 460 residues: Probable amino acid transporter skat-1 (460 aa).

10 consecutive transmembrane segments (helical) span residues 64–84, 132–152, 172–192, 194–214, 236–256, 270–290, 316–336, 362–382, 383–403, and 426–446; these read LGGL…NWYG, FVNV…ILFI, MILM…FTEM, IVSF…AVIM, TITM…ILPI, FGVL…LGFF, VNVF…YVVY, GFRV…PKLE, IMIP…FPPF, and IFIN…GVYT.

The protein belongs to the amino acid/polyamine transporter 2 family. As to expression, expressed in the head, tail, body and ventral nerve cord neurons, muscles of the vulva, and intestine.

The protein resides in the membrane. It localises to the cytoplasmic granule. Plays a role in the accumulation of vital dyes and endogenous fluorescent compounds in lysosome related organelles. Has an effect on lysosome related organelle (LRO) function, in a pathway with serotonin. This Caenorhabditis elegans protein is Probable amino acid transporter skat-1.